The following is a 268-amino-acid chain: 3-methyl-2-oxobutanoate hydroxymethyltransferase (268 aa).

Mg(2+) is bound by residues D41 and D80. 3-methyl-2-oxobutanoate is bound by residues 41–42 (DS), D80, and K110. Position 112 (E112) interacts with Mg(2+). Catalysis depends on E178, which acts as the Proton acceptor.

Belongs to the PanB family. As to quaternary structure, homodecamer; pentamer of dimers. Requires Mg(2+) as cofactor.

The protein localises to the cytoplasm. It carries out the reaction 3-methyl-2-oxobutanoate + (6R)-5,10-methylene-5,6,7,8-tetrahydrofolate + H2O = 2-dehydropantoate + (6S)-5,6,7,8-tetrahydrofolate. Its pathway is cofactor biosynthesis; coenzyme A biosynthesis. Its function is as follows. Catalyzes the reversible reaction in which hydroxymethyl group from 5,10-methylenetetrahydrofolate is transferred onto alpha-ketoisovalerate to form ketopantoate. In Natronomonas pharaonis (strain ATCC 35678 / DSM 2160 / CIP 103997 / JCM 8858 / NBRC 14720 / NCIMB 2260 / Gabara) (Halobacterium pharaonis), this protein is 3-methyl-2-oxobutanoate hydroxymethyltransferase.